A 156-amino-acid polypeptide reads, in one-letter code: Small ribosomal subunit protein uS7 (156 aa).

It belongs to the universal ribosomal protein uS7 family. Part of the 30S ribosomal subunit. Contacts proteins S9 and S11.

One of the primary rRNA binding proteins, it binds directly to 16S rRNA where it nucleates assembly of the head domain of the 30S subunit. Is located at the subunit interface close to the decoding center, probably blocks exit of the E-site tRNA. In Anaeromyxobacter dehalogenans (strain 2CP-1 / ATCC BAA-258), this protein is Small ribosomal subunit protein uS7.